The following is a 364-amino-acid chain: MAHQFPALTSEQKKALSETARRIVANGKGILAADESVGTMGNRLQRIKVENTEENRRQFRELLFTVDSSVSQSIGGVILFHETLYQKDGQGKLFRDILKEKGIVVGIKLDQGVAPLAGTNKETTVQGLDGLSERCAQYKKDGADFGKWRAVLKIDNQCPSHLAIQENANTLARYASICQQNGLVPIVEPEVIPDGSHDMEHCQYVTEKVLAAVYKALNDHHVYLEGTLLKPNMVTAGHACTKKYTPEQVAMATVTALHRTVPAAVPGICFLSGGMSEEDATLNLNAINLCPLPKPWKLSFSYGRALQASALAAWGGKAENKKTTQEAFMKRALANSQAAKGQYVHMGSSGSASTQSLFTASYTY.

Ala2 bears the N-acetylalanine mark. Residue Lys13 is modified to N6-succinyllysine. Position 36 is a phosphoserine (Ser36). Thr39 is modified (phosphothreonine). Arg43 is a beta-D-fructose 1,6-bisphosphate binding site. Phosphothreonine is present on Thr119. At Lys121 the chain carries N6-succinyllysine. Ser132 bears the Phosphoserine mark. Glu188 (proton acceptor) is an active-site residue. The Schiff-base intermediate with dihydroxyacetone-P role is filled by Lys230. A phosphoserine mark is found at Ser272, Ser276, Ser299, and Ser301. 272–274 contacts beta-D-fructose 1,6-bisphosphate; sequence SGG. Arg304 is a binding site for beta-D-fructose 1,6-bisphosphate. Ser309 is subject to Phosphoserine. The residue at position 317 (Lys317) is an N6-succinyllysine.

Belongs to the class I fructose-bisphosphate aldolase family. As to quaternary structure, homotetramer. Interacts with BBS1, BBS2, BBS4 and BBS7. Forms a ternary complex with G6PD and TP53; this interaction is direct.

It is found in the cytoplasm. Its subcellular location is the cytosol. The protein localises to the cytoskeleton. It localises to the microtubule organizing center. The protein resides in the centrosome. It is found in the centriolar satellite. It catalyses the reaction beta-D-fructose 1,6-bisphosphate = D-glyceraldehyde 3-phosphate + dihydroxyacetone phosphate. It carries out the reaction beta-D-fructose 1-phosphate = D-glyceraldehyde + dihydroxyacetone phosphate. It functions in the pathway carbohydrate degradation; glycolysis; D-glyceraldehyde 3-phosphate and glycerone phosphate from D-glucose: step 4/4. Its pathway is carbohydrate biosynthesis; gluconeogenesis. The protein operates within carbohydrate metabolism; fructose metabolism. Functionally, catalyzes the aldol cleavage of fructose 1,6-biphosphate to form two triosephosphates dihydroxyacetone phosphate and D-glyceraldehyde 3-phosphate in glycolysis as well as the reverse stereospecific aldol addition reaction in gluconeogenesis. In fructolysis, metabolizes fructose 1-phosphate derived from the phosphorylation of dietary fructose by fructokinase into dihydroxyacetone phosphate and D-glyceraldehyde. Acts as an adapter independently of its enzymatic activity, exerts a tumor suppressor role by stabilizing the ternary complex with G6PD and TP53 to inhibit G6PD activity and keep oxidative pentose phosphate metabolism in check. The protein is Fructose-bisphosphate aldolase B (ALDOB) of Bos taurus (Bovine).